A 341-amino-acid polypeptide reads, in one-letter code: Protein-glutamate methylesterase/protein-glutamine glutaminase 2 (341 aa).

Positions 7 to 120 (KTLIVDDSLL…NRDLDSFFSE (114 aa)) constitute a Response regulatory domain. At D58 the chain carries 4-aspartylphosphate. The CheB-type methylesterase domain maps to 155 to 341 (VIAIGASTGG…QALYKLINQL (187 aa)). Residues S161, H187, and D283 contribute to the active site.

Belongs to the CheB family. Post-translationally, phosphorylated by CheA. Phosphorylation of the N-terminal regulatory domain activates the methylesterase activity.

The protein localises to the cytoplasm. It carries out the reaction [protein]-L-glutamate 5-O-methyl ester + H2O = L-glutamyl-[protein] + methanol + H(+). The enzyme catalyses L-glutaminyl-[protein] + H2O = L-glutamyl-[protein] + NH4(+). Its function is as follows. Involved in chemotaxis. Part of a chemotaxis signal transduction system that modulates chemotaxis in response to various stimuli. Catalyzes the demethylation of specific methylglutamate residues introduced into the chemoreceptors (methyl-accepting chemotaxis proteins or MCP) by CheR. Also mediates the irreversible deamidation of specific glutamine residues to glutamic acid. The chain is Protein-glutamate methylesterase/protein-glutamine glutaminase 2 from Syntrophomonas wolfei subsp. wolfei (strain DSM 2245B / Goettingen).